Reading from the N-terminus, the 357-residue chain is Ribosomal RNA large subunit methyltransferase M (357 aa).

Residues Ser-183, 216-219 (APGG), Asp-235, Asp-255, and Asp-271 each bind S-adenosyl-L-methionine. The active-site Proton acceptor is Lys-300.

The protein belongs to the class I-like SAM-binding methyltransferase superfamily. RNA methyltransferase RlmE family. RlmM subfamily. Monomer.

It is found in the cytoplasm. It catalyses the reaction cytidine(2498) in 23S rRNA + S-adenosyl-L-methionine = 2'-O-methylcytidine(2498) in 23S rRNA + S-adenosyl-L-homocysteine + H(+). Catalyzes the 2'-O-methylation at nucleotide C2498 in 23S rRNA. This Pseudomonas fluorescens (strain ATCC BAA-477 / NRRL B-23932 / Pf-5) protein is Ribosomal RNA large subunit methyltransferase M.